The primary structure comprises 276 residues: Omega-amidase NIT2 (276 aa).

The region spanning Phe-4 to Leu-248 is the CN hydrolase domain. Ser-26 carries the phosphoserine modification. Catalysis depends on Glu-43, which acts as the Proton acceptor. Lys-68 is subject to N6-acetyllysine; alternate. Residue Lys-68 is modified to N6-succinyllysine; alternate. Catalysis depends on Lys-112, which acts as the Proton donor. An N6-succinyllysine mark is found at Lys-123 and Lys-130. Cys-153 serves as the catalytic Nucleophile.

As to quaternary structure, homodimer. As to expression, detected in fetal brain (at protein level). Ubiquitous. Detected in heart, brain, placenta, lung, liver, skeletal muscle, kidney, pancreas, prostate, spleen, thymus, prostate, testis, ovary, small intestine and colon.

Its subcellular location is the cytoplasm. The enzyme catalyses a monoamide of a dicarboxylate + H2O = a dicarboxylate + NH4(+). The catalysed reaction is 2-oxoglutaramate + H2O = 2-oxoglutarate + NH4(+). It catalyses the reaction 2-oxosuccinamate + H2O = oxaloacetate + NH4(+). In terms of biological role, has omega-amidase activity. The role of omega-amidase is to remove potentially toxic intermediates by converting 2-oxoglutaramate and 2-oxosuccinamate to biologically useful 2-oxoglutarate and oxaloacetate, respectively. This chain is Omega-amidase NIT2 (NIT2), found in Homo sapiens (Human).